Here is a 605-residue protein sequence, read N- to C-terminus: Dihydrogeodin oxidase (605 aa).

The first 18 residues, 1 to 18 (MPSLKDWVVAGLVPMTIA), serve as a signal peptide directing secretion. N27, N107, and N112 each carry an N-linked (GlcNAc...) asparagine glycan. Plastocyanin-like domains lie at 65–183 (TVTQ…GPSS), 189–347 (DLGP…YDES), and 424–567 (YVDW…KIKP). H117, H119, H161, and H163 together coordinate Cu cation. 2 N-linked (GlcNAc...) asparagine glycosylation sites follow: N278 and N467. Positions 484, 487, 489, 543, 544, 545, and 549 each coordinate Cu cation.

It belongs to the multicopper oxidase family. Cu cation is required as a cofactor.

It catalyses the reaction 2 dihydrogeodin + O2 + 2 H(+) = 2 (+)-geodin + 2 H2O. It functions in the pathway secondary metabolite biosynthesis. Functionally, dihydrogeodin oxidase; part of the gene cluster that mediates the biosynthesis of geodin, an intermediate in the biosynthesis of other natural products. The pathway begins with the synthesis of atrochrysone thioester by the polyketide synthase (PKS) gedC. The atrochrysone carboxyl ACP thioesterase gedB then breaks the thioester bond and releases the atrochrysone carboxylic acid from gedC. The atrochrysone carboxylic acid is then converted to atrochrysone which is further transformed into emodinanthrone. The next step is performed by the emodinanthrone oxygenase gedH that catalyzes the oxidation of emodinanthrone to emodin. Emodin O-methyltransferase encoded probably by gedA then catalyzes methylation of the 8-hydroxy group of emodin to form questin. Ring cleavage of questin by questin oxidase gedK leads to desmethylsulochrin via several intermediates including questin epoxide. Another methylation step probably catalyzed by methyltransferase gedG leads to the formation of sulochrin which is further converted to dihydrogeodin by the sulochrin halogenase gedL. Finally, the dihydrogeodin oxidase gedJ catalyzes the stereospecific phenol oxidative coupling reaction converting dihydrogeodin to geodin. The chain is Dihydrogeodin oxidase from Aspergillus terreus (strain NIH 2624 / FGSC A1156).